A 208-amino-acid polypeptide reads, in one-letter code: MASSASKFIKCVTVGDGAVGKTCMLICYTSNKFPTDYIPTVFDNFSVNVVVEGITVNLGLWDTAGQEDYNRLRPLSYRGADVFVLAFSLISRASYENVFKKWIPELQHFAPGVPIVLVGTKMDLREDRHYLSDHPGLSPVTTSQGEELRKHIGATYYIECSSKTQQNVKAVFDAAIKVVIKPAVKQKEKKKKQKPRSGCLSNILCGKN.

Residue 15–22 (GDGAVGKT) coordinates GTP. An Effector region motif is present at residues 37-45 (YIPTVFDNF). GTP is bound by residues 62-66 (DTAGQ) and 120-123 (TKMD). 2 S-palmitoyl cysteine lipidation sites follow: Cys199 and Cys205.

The protein belongs to the small GTPase superfamily. Rho family. Interacts with ICR1. Binds to SPK1. Although this sequence has a C-terminal -CXXX, it is palmitoylated at Cys-205, rather than prenylated.

It localises to the membrane. In terms of biological role, acts as a negative regulator of abscisic acid (ABA) responses. In Arabidopsis thaliana (Mouse-ear cress), this protein is Rac-like GTP-binding protein ARAC8 (ARAC8).